A 363-amino-acid chain; its full sequence is UDP-N-acetylglucosamine--N-acetylmuramyl-(pentapeptide) pyrophosphoryl-undecaprenol N-acetylglucosamine transferase (363 aa).

Residues 10-12 (TGG), asparagine 124, serine 195, isoleucine 248, and glutamine 293 each bind UDP-N-acetyl-alpha-D-glucosamine.

It belongs to the glycosyltransferase 28 family. MurG subfamily.

Its subcellular location is the cell membrane. The enzyme catalyses Mur2Ac(oyl-L-Ala-gamma-D-Glu-L-Lys-D-Ala-D-Ala)-di-trans,octa-cis-undecaprenyl diphosphate + UDP-N-acetyl-alpha-D-glucosamine = beta-D-GlcNAc-(1-&gt;4)-Mur2Ac(oyl-L-Ala-gamma-D-Glu-L-Lys-D-Ala-D-Ala)-di-trans,octa-cis-undecaprenyl diphosphate + UDP + H(+). Its pathway is cell wall biogenesis; peptidoglycan biosynthesis. Its function is as follows. Cell wall formation. Catalyzes the transfer of a GlcNAc subunit on undecaprenyl-pyrophosphoryl-MurNAc-pentapeptide (lipid intermediate I) to form undecaprenyl-pyrophosphoryl-MurNAc-(pentapeptide)GlcNAc (lipid intermediate II). The sequence is that of UDP-N-acetylglucosamine--N-acetylmuramyl-(pentapeptide) pyrophosphoryl-undecaprenol N-acetylglucosamine transferase from Lacticaseibacillus casei (strain BL23) (Lactobacillus casei).